Consider the following 295-residue polypeptide: Aspartate carbamoyltransferase catalytic subunit (295 aa).

Carbamoyl phosphate-binding residues include Arg49 and Thr50. Lys77 is a binding site for L-aspartate. Residues Arg99, His127, and Gln130 each coordinate carbamoyl phosphate. L-aspartate-binding residues include Arg161 and Arg212. Residues Gly251 and Pro252 each coordinate carbamoyl phosphate.

Belongs to the aspartate/ornithine carbamoyltransferase superfamily. ATCase family. Heterododecamer (2C3:3R2) of six catalytic PyrB chains organized as two trimers (C3), and six regulatory PyrI chains organized as three dimers (R2).

The enzyme catalyses carbamoyl phosphate + L-aspartate = N-carbamoyl-L-aspartate + phosphate + H(+). It participates in pyrimidine metabolism; UMP biosynthesis via de novo pathway; (S)-dihydroorotate from bicarbonate: step 2/3. Catalyzes the condensation of carbamoyl phosphate and aspartate to form carbamoyl aspartate and inorganic phosphate, the committed step in the de novo pyrimidine nucleotide biosynthesis pathway. The protein is Aspartate carbamoyltransferase catalytic subunit of Campylobacter jejuni subsp. jejuni serotype O:6 (strain 81116 / NCTC 11828).